Consider the following 1143-residue polypeptide: Disease resistance protein Piks-1 (1143 aa).

The tract at residues 1–190 (MEAAAMAVTA…PLRIMGGEMQ (190 aa)) is structured coiled coil (CC) domain. The region spanning 189–258 (MQKIVFKIPM…KVGPAMFLEV (70 aa)) is the HMA domain. Positions 191–264 (KIVFKIPMVD…FLEVSQAKED (74 aa)) are HMA-like domain. The region spanning 282–570 (HEVKTICILG…WIAEGFVSEE (289 aa)) is the NB-ARC domain. LRR repeat units lie at residues 681–706 (FKRLRVLDLEDNKDIQDSHLQGICEQ), 708–731 (SLRVRYLGLKGTRIRKLPQEMRKL), 732–754 (KHLEILYVGSTRISELPQEIGEL), 756–777 (HLRILDVRNTDITELPLQIREL), 778–800 (QHLHTLDVRNTPISELPPQVGKL), 802–823 (NLKIMCVRSTGVRELPKEIGEL), 824–848 (NHLQTLDVRNTRVRELPWQAGQISQ), 945–968 (MPNLQTLVLRFEALPRQPITINGT), 979–1002 (DSRVPRIAFHEDAMPNLKLLEFKF), and 1004–1027 (AGPASNDAIGITNLKSLQKVVFRC).

Belongs to the disease resistance NB-LRR family. In terms of assembly, interacts with AVR-Pik through its N-terminal part containing the HMA-like domain.

In terms of biological role, disease resistance (R) protein that specifically recognizes the AVR-Pik effector avirulence protein from M.oryzae. Resistance proteins guard the plant against pathogens that contain an appropriate avirulence protein via an indirect interaction with this avirulence protein. That triggers a defense system including the hypersensitive response, which restricts the pathogen growth. This is Disease resistance protein Piks-1 from Oryza sativa subsp. japonica (Rice).